The chain runs to 483 residues: MAGFAELGLSSWLVEQCRQLGLKQPTPVQLGCIPAILEGRDCLGCAKTGSGKTAAFVLPILQKLSEDPYGIFCLVLTPTRELAYQIAEQFRVLGKPLGLKDCIIVGGMDMVAQALELSRKPHVVIATPGRLADHLRSSNTFSIKKIRFLVMDEADRLLEQGCTDFTVDLEAILAAVPARRQTLLFSATLTDTLRELQGLATNQPFFWEAQAPVSTVEQLDQRYLLVPEKVKDAYLVHLIQRFQDEHEDWSIIIFTNTCKTCQILCMMLRKFSFPTVALHSMMKQKERFAALAKFKSSIYRILIATDVASRGLDIPTVQVVINHNTPGLPKIYIHRVGRTARAGRQGQAITLVTQYDIHLVHAIEEQIKKKLEEFSVEEAEVLQILTQVNVVRRECEIKLEAAHFDEKKEINKRKQLILEGKDPDLEAKRKAELAKIKQKNRRFKEKVEETLKRQKAGRAGHKGRPPRTPSGSHSGPVPSQGLV.

The short motif at 2–30 (AGFAELGLSSWLVEQCRQLGLKQPTPVQL) is the Q motif element. Residues 33 to 207 (IPAILEGRDC…GLATNQPFFW (175 aa)) enclose the Helicase ATP-binding domain. ATP is bound at residue 46-53 (AKTGSGKT). The DEAD box motif lies at 152–155 (DEAD). One can recognise a Helicase C-terminal domain in the interval 218-382 (QLDQRYLLVP…EFSVEEAEVL (165 aa)). A disordered region spans residues 444–483 (KEKVEETLKRQKAGRAGHKGRPPRTPSGSHSGPVPSQGLV). The segment covering 453-465 (RQKAGRAGHKGRP) has biased composition (basic residues).

It belongs to the DEAD box helicase family. DDX49/DBP8 subfamily.

It localises to the nucleus. The protein localises to the nucleolus. The catalysed reaction is ATP + H2O = ADP + phosphate + H(+). In terms of biological role, ATP-dependent RNA helicase that plays a role in various aspects of RNA metabolism including the regulation of mRNA export and the levels of pre-ribosomal RNA. Regulates the stability and synthesis of pre-ribosomal RNA and thereby regulates cell proliferation. Also possesses antiviral activity by recognizing gammaherpesvirus transcripts in the context of lytic reactivation. The sequence is that of Probable ATP-dependent RNA helicase DDX49 (DDX49) from Homo sapiens (Human).